The following is a 62-amino-acid chain: Arabinogalactan protein 40 (62 aa).

The N-terminal stretch at 1 to 22 (MEMKNIFVALFISAVLVSSVSA) is a signal peptide. Pro-28, Pro-30, and Pro-32 each carry 4-hydroxyproline. O-linked (Ara...) hydroxyproline glycans are attached at residues Pro-28, Pro-30, and Pro-32. Ser-35 carries the GPI-anchor amidated serine lipid modification. Residues 36-62 (SASTVAFPVVGSIVAASLSAFLALLLQ) constitute a propeptide, removed in mature form.

The protein belongs to the AG-peptide AGP family. In terms of processing, contains 4-hydroxyproline; hydroxylated on Pro-28, Pro-30 and Pro-32. Post-translationally, O-glycosylated on hydroxyprolines; noncontiguous hydroxylproline residues are glycosylated with arabinogalactan.

The protein localises to the cell membrane. Proteoglycan that seems to be implicated in diverse developmental roles such as differentiation, cell-cell recognition, embryogenesis and programmed cell death. This is Arabinogalactan protein 40 from Arabidopsis thaliana (Mouse-ear cress).